The following is a 409-amino-acid chain: Translation initiation factor 2 subunit gamma (409 aa).

Positions 6-203 constitute a tr-type G domain; it reads QPEVNIGLVG…AVQSEIPTPE (198 aa). Positions 15–22 are G1; that stretch reads GHVDHGKT. Residues D18, T22, G43, and S45 each coordinate Mg(2+). 18-23 serves as a coordination point for GTP; the sequence is DHGKTT. A G2 region spans residues 43 to 47; sequence GISIR. Residues 90–93 form a G3 region; sequence DAPG. GTP contacts are provided by residues 146-149 and 181-183; these read NKVD and SAG. The segment at 146 to 149 is G4; that stretch reads NKVD. The G5 stretch occupies residues 181–183; the sequence is SAG.

It belongs to the TRAFAC class translation factor GTPase superfamily. Classic translation factor GTPase family. EIF2G subfamily. Heterotrimer composed of an alpha, a beta and a gamma chain. The cofactor is Mg(2+).

It carries out the reaction GTP + H2O = GDP + phosphate + H(+). Its function is as follows. eIF-2 functions in the early steps of protein synthesis by forming a ternary complex with GTP and initiator tRNA. The sequence is that of Translation initiation factor 2 subunit gamma from Haloarcula marismortui (strain ATCC 43049 / DSM 3752 / JCM 8966 / VKM B-1809) (Halobacterium marismortui).